A 415-amino-acid polypeptide reads, in one-letter code: Glycerate 2-kinase (415 aa).

Lysine 57 contributes to the substrate binding site.

It belongs to the glycerate kinase type-1 family. As to quaternary structure, homodimer. Mg(2+) serves as cofactor. It depends on Ni(2+) as a cofactor. The cofactor is Mn(2+). Co(2+) is required as a cofactor.

The enzyme catalyses (R)-glycerate + ATP = (2R)-2-phosphoglycerate + ADP + H(+). Functionally, catalyzes the ATP-dependent phosphorylation of D-glycerate to 2-phosphoglycerate. It can also partially utilize GTP, CTP or UTP as phosphate donor. This is Glycerate 2-kinase (gck) from Picrophilus torridus (strain ATCC 700027 / DSM 9790 / JCM 10055 / NBRC 100828 / KAW 2/3).